Reading from the N-terminus, the 89-residue chain is Large ribosomal subunit protein bL27 (89 aa).

The interval 1–26 is disordered; sequence MAHKKAGGSSKNGRDSNAQRRGVKRF.

It belongs to the bacterial ribosomal protein bL27 family.

The polypeptide is Large ribosomal subunit protein bL27 (Maridesulfovibrio salexigens (strain ATCC 14822 / DSM 2638 / NCIMB 8403 / VKM B-1763) (Desulfovibrio salexigens)).